The primary structure comprises 336 residues: Protein ABHD13 (336 aa).

Residues 37 to 57 (FNMYGGVILLLLIFVSIAGIL) traverse the membrane as a helical; Signal-anchor for type II membrane protein segment. Residues Ser193, Asp268, and His298 each act as charge relay system in the active site. The N-linked (GlcNAc...) asparagine glycan is linked to Asn299.

The protein belongs to the serine esterase family.

The protein localises to the membrane. The protein is Protein ABHD13 of Xenopus laevis (African clawed frog).